The sequence spans 142 residues: C-type lectin 13 (142 aa).

The signal sequence occupies residues 1-23; it reads MGRLVFVSFGGWDVFLSLSGTGA. 3 cysteine pairs are disulfide-bonded: cysteine 25-cysteine 36, cysteine 53-cysteine 138, and cysteine 115-cysteine 130. A C-type lectin domain is found at 32-139; the sequence is YEGHCYRVFQ…CSKTHNVVCK (108 aa).

This sequence belongs to the snaclec family. As to quaternary structure, heteromultimer; disulfide-linked. In terms of tissue distribution, expressed by the venom gland.

The protein localises to the secreted. Functionally, interferes with one step of hemostasis (modulation of platelet aggregation, or coagulation cascade, for example). This Crotalus adamanteus (Eastern diamondback rattlesnake) protein is C-type lectin 13.